Reading from the N-terminus, the 400-residue chain is Probable peptidoglycan glycosyltransferase FtsW (400 aa).

The Cytoplasmic portion of the chain corresponds to 1 to 29 (MVIERIKHLASPLQDWVFTPSPKVMFDRQ). A helical membrane pass occupies residues 30 to 50 (LIWIALGLMLTGLVMVASASF). At 51-60 (PISTRLTGQP) the chain is on the periplasmic side. A helical transmembrane segment spans residues 61–81 (FHFMMRHMLFVFLALSISSIV). The Cytoplasmic portion of the chain corresponds to 82-95 (LRIELNKWLKYSSH). The chain crosses the membrane as a helical span at residues 96–116 (LLLISLLLLAAVLVVGKSVNG). Residues 117-122 (AARWLP) lie on the Periplasmic side of the membrane. Residues 123–143 (LGIFNLQPAEVAKLSLFVFIA) traverse the membrane as a helical segment. At 144-155 (GYLVRRHGEVRD) the chain is on the cytoplasmic side. A helical membrane pass occupies residues 156–176 (SFRGFVKPLLVLITLAFFLLM). The Periplasmic portion of the chain corresponds to 177–178 (QP). Residues 179–199 (DLGTTVVMFVTTIAMLFIAGA) form a helical membrane-spanning segment. Position 200 (Lys-200) is a topological domain, cytoplasmic. The helical transmembrane segment at 201–221 (LWQFIALVMGGISLVIVLILA) threads the bilayer. Residues 222 to 290 (EPYRMRRVTS…VFAVIAEELG (69 aa)) are Periplasmic-facing. Residues 291 to 311 (FVGVCLVLCLIFALVFKALLI) form a helical membrane-spanning segment. Over 312–321 (GRKCLAHDQR) the chain is Cytoplasmic. A helical transmembrane segment spans residues 322–342 (FGGFLAFGIGIWFAFQTLVNV). Residues 343 to 356 (GAAAGIVPTKGLTL) are Periplasmic-facing. Residues 357–377 (PLISYGGSSLIIMSVAVSLLI) form a helical membrane-spanning segment. Residues 378 to 400 (RIDHECRVYLANEPPRSENEEQK) are Cytoplasmic-facing.

The protein belongs to the SEDS family. FtsW subfamily.

The protein localises to the cell inner membrane. The enzyme catalyses [GlcNAc-(1-&gt;4)-Mur2Ac(oyl-L-Ala-gamma-D-Glu-L-Lys-D-Ala-D-Ala)](n)-di-trans,octa-cis-undecaprenyl diphosphate + beta-D-GlcNAc-(1-&gt;4)-Mur2Ac(oyl-L-Ala-gamma-D-Glu-L-Lys-D-Ala-D-Ala)-di-trans,octa-cis-undecaprenyl diphosphate = [GlcNAc-(1-&gt;4)-Mur2Ac(oyl-L-Ala-gamma-D-Glu-L-Lys-D-Ala-D-Ala)](n+1)-di-trans,octa-cis-undecaprenyl diphosphate + di-trans,octa-cis-undecaprenyl diphosphate + H(+). Its pathway is cell wall biogenesis; peptidoglycan biosynthesis. Its function is as follows. Peptidoglycan polymerase that is essential for cell division. This chain is Probable peptidoglycan glycosyltransferase FtsW, found in Aliivibrio salmonicida (strain LFI1238) (Vibrio salmonicida (strain LFI1238)).